The sequence spans 164 residues: Cyanate hydratase (164 aa).

Active-site residues include Arg-90, Glu-93, and Ser-116.

The protein belongs to the cyanase family.

It carries out the reaction cyanate + hydrogencarbonate + 3 H(+) = NH4(+) + 2 CO2. Functionally, catalyzes the reaction of cyanate with bicarbonate to produce ammonia and carbon dioxide. This is Cyanate hydratase from Ricinus communis (Castor bean).